A 160-amino-acid chain; its full sequence is Eukaryotic translation initiation factor 5A-2 (160 aa).

Basic and acidic residues predominate over residues 1 to 12 (MSDEEHHFESKA). A disordered region spans residues 1 to 21 (MSDEEHHFESKADAGASKTFP). Lys52 carries the hypusine modification.

It belongs to the eIF-5A family. Post-translationally, lys-52 undergoes hypusination, a unique post-translational modification that consists in the addition of a butylamino group from spermidine to lysine side chain, leading to the formation of the unusual amino acid hypusine. eIF-5As are the only known proteins to undergo this modification, which is essential for their function.

Translation factor that promotes translation elongation and termination, particularly upon ribosome stalling at specific amino acid sequence contexts. Binds between the exit (E) and peptidyl (P) site of the ribosome and promotes rescue of stalled ribosome: specifically required for efficient translation of polyproline-containing peptides as well as other motifs that stall the ribosome. Acts as a ribosome quality control (RQC) cofactor by joining the RQC complex to facilitate peptidyl transfer during CAT tailing step. This Solanum lycopersicum (Tomato) protein is Eukaryotic translation initiation factor 5A-2.